Reading from the N-terminus, the 254-residue chain is Dihydroanticapsin 7-dehydrogenase (254 aa).

An NAD(+)-binding site is contributed by 9–31 (LITGGASGIGYAAVQAFLNQQAN). Ser139 is a substrate binding site. Tyr152 functions as the Proton acceptor in the catalytic mechanism.

This sequence belongs to the short-chain dehydrogenases/reductases (SDR) family.

The enzyme catalyses L-dihydroanticapsin + NAD(+) = L-anticapsin + NADH + H(+). It functions in the pathway antibiotic biosynthesis; bacilysin biosynthesis. Its function is as follows. Part of the bacABCDEFG operon responsible for the biosynthesis of bacilysin, an irreversible inactivator of the glutaminase domain of glucosamine synthetase. Catalyzes the dehydrogenation of the C7-hydroxyl group in the 4S-tetrahydrotyrosine (4S-H4Tyr) to yield anticapsin (epoxycyclohexanonyl-Ala). The sequence is that of Dihydroanticapsin 7-dehydrogenase from Bacillus amyloliquefaciens (Bacillus velezensis).